The following is a 342-amino-acid chain: Flagellar P-ring protein (342 aa).

The N-terminal stretch at 1–19 (MKRVFLWLIFVLAFHKLLA) is a signal peptide.

Belongs to the FlgI family. As to quaternary structure, the basal body constitutes a major portion of the flagellar organelle and consists of four rings (L,P,S, and M) mounted on a central rod.

It localises to the periplasm. The protein localises to the bacterial flagellum basal body. Functionally, assembles around the rod to form the L-ring and probably protects the motor/basal body from shearing forces during rotation. This is Flagellar P-ring protein from Helicobacter pylori (strain P12).